The primary structure comprises 263 residues: Achaete-scute homolog 2 (263 aa).

Disordered stretches follow at residues R104–R126 and P194–P248. Low complexity-rich tracts occupy residues A110–A121, P202–P220, and S230–S247. Residues A118–L170 enclose the bHLH domain.

Efficient DNA binding requires dimerization with another basic helix-loop-helix (bHLH) protein. Forms heterodimers with bHLH transcription factor TCF3. May not heterodimerise with bHLH protein HAND1. As to expression, expressed in follicular T-helper (Tfh) cells.

The protein resides in the nucleus. Functionally, transcription factor. Binds to E-box motifs 5'-CANNTG-3' in the regulatory elements of target genes, probably as a heterodimer with another basic helix-loop-helix (bHLH) protein such as the transcription factor TCF3. May bind both open and closed chromatin, acting as a pioneer transcription factor to allow other factors to bind and activate lineage-specific genes. Required during post-implantation development for the generation of some differentiated trophoblast cell types. Transcriptional activity of ASCL2 may be antagonised in a subset of trophoblast cells by bHLH transcription factor HAND1, perhaps by competing for dimerization with other bHLH proteins. Involved in differentiation and function of follicular T-helper (Tfh) cells, thereby playing a role in germinal center responses; probably modulates expression of genes involved in Tfh cell function, such as BCL6. May also act as a suppressor of Th1-, Th2- and Th17-cell differentiation. Induces the formation of stem cells in intestinal crypts in vitro, synergistically activating transcription of target genes, such as SOX9, together with TCF4/beta-catenin. May form a bistable transcriptional switch, controlling expression of its own gene together with Wnt/R-spondin signaling, and thereby maintaining stem cell characteristics. Modulates expression of target genes, including perhaps down-regulating EGR1/Krox24 and chemokine CXCL10/Mob-1 and up-regulating CXCR4 and CDKN1C/p57kip2, in Schwann cells. May play a role in reducing proliferation of Schwann cells, perhaps acting via modulation of expression of CDKN1C. May be dispensable for blastocyst formation and later embryonic function. May be involved in the determination of neuronal precursors. The chain is Achaete-scute homolog 2 (Ascl2) from Mus musculus (Mouse).